The chain runs to 24 residues: Lactadherin (24 aa).

The protein resides in the membrane. It localises to the secreted. The protein localises to the cytoplasmic vesicle. It is found in the secretory vesicle. Its subcellular location is the acrosome membrane. Specific ligand for the alpha-v/beta-3 and alpha-v/beta-5 receptors. Also binds to phosphatidylserine-enriched cell surfaces in a receptor-independent manner. Zona pellucida-binding protein which may play a role in gamete interaction. Contributes to phagocytic removal of apoptotic cells in many tissues. Plays an important role in the maintenance of intestinal epithelial homeostasis and the promotion of mucosal healing. Promotes VEGF-dependent neovascularization. The polypeptide is Lactadherin (Equus asinus (Donkey)).